The following is an 811-amino-acid chain: N-terminal acetyltransferase B complex subunit arm1 (811 aa).

Belongs to the MDM20/NAA25 family. Component of the N-terminal acetyltransferase B (NatB) complex.

It localises to the cytoplasm. In terms of biological role, non-catalytic subunit of the NatB N-terminal acetyltransferase, which catalyzes acetylation of the amino-terminal methionine residues of all proteins beginning with Met-Asp or Met-Glu and of some proteins beginning with Met-Asn or Met-Met. The sequence is that of N-terminal acetyltransferase B complex subunit arm1 (arm1) from Schizosaccharomyces pombe (strain 972 / ATCC 24843) (Fission yeast).